The chain runs to 914 residues: Beta-mannosidase A (914 aa).

The N-terminal stretch at 1–20 (MRFTATAAALVASSIPATLG) is a signal peptide. Asparagine 39, asparagine 79, asparagine 230, asparagine 265, asparagine 299, asparagine 309, and asparagine 330 each carry an N-linked (GlcNAc...) asparagine glycan. Glutamate 462 serves as the catalytic Proton donor. Asparagine 591, asparagine 614, asparagine 641, asparagine 721, asparagine 744, asparagine 773, asparagine 784, and asparagine 909 each carry an N-linked (GlcNAc...) asparagine glycan.

The protein belongs to the glycosyl hydrolase 2 family. Beta-mannosidase A subfamily. In terms of assembly, homodimer.

The protein resides in the secreted. The enzyme catalyses Hydrolysis of terminal, non-reducing beta-D-mannose residues in beta-D-mannosides.. It functions in the pathway glycan metabolism; N-glycan degradation. In terms of biological role, exoglycosidase that cleaves the single beta-linked mannose residue from the non-reducing end of beta-mannosidic oligosaccharides of various complexity and length. Involved in the degradation of polymeric mannan and galactomannan. The polypeptide is Beta-mannosidase A (mndA) (Aspergillus oryzae (strain ATCC 42149 / RIB 40) (Yellow koji mold)).